We begin with the raw amino-acid sequence, 1125 residues long: Phytochrome A (1125 aa).

Composition is skewed to low complexity over residues 1–14 (MSSS…SNSA) and 39–48 (SGSSFDYSSS). 2 disordered regions span residues 1–22 (MSSS…SARI) and 38–64 (ESGS…PRSD). The 184-residue stretch at 218-401 (SMERLCDTMV…VFAIHVNKEL (184 aa)) folds into the GAF domain. Position 323 (cysteine 323) interacts with phytochromobilin. PAS domains are found at residues 617-687 (VTSE…LQGK) and 750-821 (DYKA…VNLG). The 217-residue stretch at 901–1117 (YLKKQIWNPL…SFIISVELAG (217 aa)) folds into the Histidine kinase domain.

The protein belongs to the phytochrome family. In terms of assembly, homodimer. Contains one covalently linked phytochromobilin chromophore.

Regulatory photoreceptor which exists in two forms that are reversibly interconvertible by light: the Pr form that absorbs maximally in the red region of the spectrum and the Pfr form that absorbs maximally in the far-red region. Photoconversion of Pr to Pfr induces an array of morphogenic responses, whereas reconversion of Pfr to Pr cancels the induction of those responses. Pfr controls the expression of a number of nuclear genes including those encoding the small subunit of ribulose-bisphosphate carboxylase, chlorophyll A/B binding protein, protochlorophyllide reductase, rRNA, etc. It also controls the expression of its own gene(s) in a negative feedback fashion. This Populus tremuloides (Quaking aspen) protein is Phytochrome A (PHYA).